Reading from the N-terminus, the 368-residue chain is Histidinol-phosphate aminotransferase (368 aa).

Lysine 229 carries the N6-(pyridoxal phosphate)lysine modification.

The protein belongs to the class-II pyridoxal-phosphate-dependent aminotransferase family. Histidinol-phosphate aminotransferase subfamily. As to quaternary structure, homodimer. Pyridoxal 5'-phosphate is required as a cofactor.

It carries out the reaction L-histidinol phosphate + 2-oxoglutarate = 3-(imidazol-4-yl)-2-oxopropyl phosphate + L-glutamate. Its pathway is amino-acid biosynthesis; L-histidine biosynthesis; L-histidine from 5-phospho-alpha-D-ribose 1-diphosphate: step 7/9. The chain is Histidinol-phosphate aminotransferase from Acidovorax ebreus (strain TPSY) (Diaphorobacter sp. (strain TPSY)).